The primary structure comprises 99 residues: Regulatory protein FanB (99 aa).

Functionally, trans-acting protein involved in the regulation of the biogenesis of K99 fimbriae (FanC). The protein is Regulatory protein FanB (fanB) of Escherichia coli.